The primary structure comprises 593 residues: Probable metalloendopeptidase G1-type (593 aa).

Residue His41 coordinates Zn(2+). Residue Glu44 is part of the active site. His45 provides a ligand contact to Zn(2+).

Belongs to the peptidase M44 family. It depends on Zn(2+) as a cofactor.

In terms of biological role, seems to be involved in viral proteins maturation by cleavage at Ala-Gly-|-Xaa motifs. The protein is Probable metalloendopeptidase G1-type of Homo sapiens (Human).